The following is a 330-amino-acid chain: Aquaporin-3 (330 aa).

The Cytoplasmic segment spans residues 1–40 (MSATPIIHLRDVKKRTGVLNAWERVRNKPQVHWAMECFAE). Residues 41-61 (ALGVFFYVYFGLGSTAAWVIG) traverse the membrane as a helical segment. The Extracellular portion of the chain corresponds to 62–71 (NILKQSGLSS). The helical transmembrane segment at 72-92 (VFQIGFAYAFGILFAIGVCAA) threads the bilayer. Residues 93–124 (TSGGHFNPCVTIAFTIFRGFPPLKAVRYIVAQ) are Cytoplasmic-facing. Positions 99–101 (NPC) match the NPA 1 motif. The helical transmembrane segment at 125–145 (ILGAYIASALVYNQWKVLIVE) threads the bilayer. Residues 146–157 (SELLLKQAGVYE) lie on the Extracellular side of the membrane. The helical transmembrane segment at 158-178 (TTMFTPNGPAGIFALYLLPGA) threads the bilayer. Residues 179-183 (QTLPR) lie on the Cytoplasmic side of the membrane. A helical membrane pass occupies residues 184 to 204 (AFLNEFVNCFVLALVIWAALD). Residues 205 to 207 (PTS) lie on the Extracellular side of the membrane. Residues 208–228 (FMIPPVMAPFIIAAAYAGSIW) form a helical membrane-spanning segment. Over 229-264 (GYAVPAISLNSARDIGCRLFALTIWGKSAAGGSYSA) the chain is Cytoplasmic. Residues 238–240 (NSA) carry the NPA 2 motif. Residues 265–285 (IAALVNIPATLLAAVVYELFL) traverse the membrane as a helical segment. Residues 286 to 330 (VDSDRVVAGSHLEFMNVAANHRRHRQQAEDDNLVEADDSSQEKPV) lie on the Extracellular side of the membrane. The segment at 308–330 (RHRQQAEDDNLVEADDSSQEKPV) is disordered. A compositionally biased stretch (acidic residues) spans 314-324 (EDDNLVEADDS).

This sequence belongs to the MIP/aquaporin (TC 1.A.8) family.

The protein localises to the cell membrane. The enzyme catalyses H2O(in) = H2O(out). It catalyses the reaction CO2(out) = CO2(in). Functionally, water channel required to facilitate the transport of water across membranes. Also mediates the transport of carbon dioxide across the membrane. This Laccaria bicolor (Bicoloured deceiver) protein is Aquaporin-3.